We begin with the raw amino-acid sequence, 354 residues long: Homeobox protein Nkx-2.4 (354 aa).

The segment at residues 188-247 (RRKRRVLFSQAQVYELERRFKQQKYLSAPEREHLASMIHLTPTQVKIWFQNHRYKMKRQA) is a DNA-binding region (homeobox). Residues 245–329 (RQAKDKAAQQ…PALHGPGGGL (85 aa)) form a disordered region. Residues 262–272 (GPPPPPPPPSP) are compositionally biased toward pro residues. The segment covering 290 to 304 (GAGTPTPGQGGQQPQ) has biased composition (low complexity).

The protein belongs to the NK-2 homeobox family. In the embryo it is detected in the posterior hypothalamus and later in the head. In the adult it is detected only in testis.

It localises to the nucleus. In terms of biological role, probable transcription factor. The polypeptide is Homeobox protein Nkx-2.4 (Nkx2-4) (Mus musculus (Mouse)).